A 312-amino-acid chain; its full sequence is Mas-related G-protein coupled receptor member E (312 aa).

The Extracellular segment spans residues 1–20 (MMEPREAGQHVGAANGAQED). The chain crosses the membrane as a helical span at residues 21–41 (VAFNLIILSLTEGLGLGGLLG). At 42 to 59 (NGAVLWLLSSNVYRNPFA) the chain is on the cytoplasmic side. Residues 60–80 (IYLLDVACADLIFLGCHMVAI) form a helical membrane-spanning segment. Over 81 to 106 (VPDLLQGRLDFPGFVQTSLATLRFFC) the chain is Extracellular. A helical membrane pass occupies residues 107–127 (YIVGLSLLAAVSVEQCLAALF). Residues 128–141 (PAWYSCRRPRHLTT) are Cytoplasmic-facing. Residues 142–162 (CVCALTWALCLLLHLLLSGAC) traverse the membrane as a helical segment. Topologically, residues 163-176 (TQFFGEPSRHLCRT) are extracellular. The helical transmembrane segment at 177–197 (LWLVAAVLLALLCCTMCGASL) threads the bilayer. The Cytoplasmic segment spans residues 198 to 217 (MLLLRVERGPQRPPPRGFPG). The chain crosses the membrane as a helical span at residues 218–238 (LILLTVLLFLFCGLPFGIYWL). Topologically, residues 239–241 (SRN) are extracellular. Residues 242–262 (LLWYIPHYFYHFSFLMAAVHC) traverse the membrane as a helical segment. Over 263 to 312 (AAKPVVYFCLGSAQGRRLPLRLVLQRALGDEAELGAVRETSRRGLVDIAA) the chain is Cytoplasmic.

This sequence belongs to the G-protein coupled receptor 1 family. Mas subfamily.

The protein localises to the cell membrane. Its function is as follows. Orphan receptor. May regulate nociceptor function and/or development, including the sensation or modulation of pain. The sequence is that of Mas-related G-protein coupled receptor member E (MRGPRE) from Homo sapiens (Human).